A 181-amino-acid polypeptide reads, in one-letter code: SELKVATQTGFVRGLSLPVLAGHVSAHLGVPFAEPFLRPEPVKPGAEMWNPNLNIWVPSGRVGAFXFLTVTLFGESAGAASVGMXLLSTQRAILQSGAPNAPWAQVQPAESRFPFVPVIDGEFFPLGVNKDEGSFGVPGFSKXXESLINQAVPHANDIYTDWQDQDNGGLPLTGNPTXPHN.

The active-site Acyl-ester intermediate is serine 76. Residue glutamate 132 is the Charge relay system of the active site. A disordered region spans residues 162 to 181 (WQDQDNGGLPLTGNPTXPHN).

It belongs to the type-B carboxylesterase/lipase family. Post-translationally, the N-terminus is blocked. As to expression, expressed by the venom gland. Is also probably expressed by liver and muscle.

The protein resides in the synapse. Its subcellular location is the secreted. It is found in the cell membrane. The enzyme catalyses acetylcholine + H2O = choline + acetate + H(+). In terms of biological role, in venom, its toxic role is unclear: it could result in less musculatory control by rapidly hydrolyzing acetylcholine, or that it works synergistically with alkaline phosphatase (ALP) in paralyzing prey through hypotension. In muscle, it terminates signal transduction at the neuromuscular junction by rapid hydrolysis of the acetylcholine released into the synaptic cleft. In liver, its function is unclear: it could serve as a safeguard against any diffusion of acetylcholine from synapses into the circulation. This chain is Acetylcholinesterase (ACHE), found in Naja oxiana (Central Asian cobra).